A 158-amino-acid chain; its full sequence is C-type lectin lectoxin-Thr1 (158 aa).

The signal sequence occupies residues 1-23; that stretch reads MGRFIFATLGLLLVAFSINGAKG. 3 disulfides stabilise this stretch: Cys26-Cys37, Cys54-Cys154, and Cys129-Cys146. The region spanning 33 to 155 is the C-type lectin domain; that stretch reads LKGFCYKVFN…CASTRAYLCK (123 aa). The short motif at 119 to 121 is the Mannose-binding element; that stretch reads EPN. Glu127, Asn142, and Asp143 together coordinate Ca(2+).

The protein belongs to the true venom lectin family. Expressed by the venom gland.

It localises to the secreted. Its function is as follows. Mannose-binding lectin which recognizes specific carbohydrate structures and agglutinates a variety of animal cells by binding to cell-surface glycoproteins and glycolipids. May be a calcium-dependent lectin. This Thrasops jacksonii (Jackson's black tree snake) protein is C-type lectin lectoxin-Thr1.